The sequence spans 448 residues: N-succinylarginine dihydrolase (448 aa).

Substrate contacts are provided by residues 19-28, N110, and 137-138; these read GGLSYGNVAS and HR. E174 is a catalytic residue. R214 is a substrate binding site. Residue H250 is part of the active site. The substrate site is built by D252 and N365. The active-site Nucleophile is the C371.

This sequence belongs to the succinylarginine dihydrolase family. In terms of assembly, homodimer.

The catalysed reaction is N(2)-succinyl-L-arginine + 2 H2O + 2 H(+) = N(2)-succinyl-L-ornithine + 2 NH4(+) + CO2. Its pathway is amino-acid degradation; L-arginine degradation via AST pathway; L-glutamate and succinate from L-arginine: step 2/5. In terms of biological role, catalyzes the hydrolysis of N(2)-succinylarginine into N(2)-succinylornithine, ammonia and CO(2). This chain is N-succinylarginine dihydrolase, found in Pseudomonas savastanoi pv. phaseolicola (strain 1448A / Race 6) (Pseudomonas syringae pv. phaseolicola (strain 1448A / Race 6)).